A 453-amino-acid chain; its full sequence is Bifunctional protein GlmU (453 aa).

The tract at residues M1–R231 is pyrophosphorylase. Residues L10–G13, K24, Q77, G82–T83, Y105–D107, G143, E157, N172, and N229 each bind UDP-N-acetyl-alpha-D-glucosamine. D107 lines the Mg(2+) pocket. N229 is a binding site for Mg(2+). Residues A232–D252 form a linker region. The interval G253–S453 is N-acetyltransferase. 2 residues coordinate UDP-N-acetyl-alpha-D-glucosamine: R318 and K336. The Proton acceptor role is filled by H348. 2 residues coordinate UDP-N-acetyl-alpha-D-glucosamine: Y351 and N362. Acetyl-CoA contacts are provided by residues A365, N371–Y372, S390, S408, and R425.

It in the N-terminal section; belongs to the N-acetylglucosamine-1-phosphate uridyltransferase family. The protein in the C-terminal section; belongs to the transferase hexapeptide repeat family. As to quaternary structure, homotrimer. It depends on Mg(2+) as a cofactor.

The protein localises to the cytoplasm. It carries out the reaction alpha-D-glucosamine 1-phosphate + acetyl-CoA = N-acetyl-alpha-D-glucosamine 1-phosphate + CoA + H(+). The enzyme catalyses N-acetyl-alpha-D-glucosamine 1-phosphate + UTP + H(+) = UDP-N-acetyl-alpha-D-glucosamine + diphosphate. It functions in the pathway nucleotide-sugar biosynthesis; UDP-N-acetyl-alpha-D-glucosamine biosynthesis; N-acetyl-alpha-D-glucosamine 1-phosphate from alpha-D-glucosamine 6-phosphate (route II): step 2/2. Its pathway is nucleotide-sugar biosynthesis; UDP-N-acetyl-alpha-D-glucosamine biosynthesis; UDP-N-acetyl-alpha-D-glucosamine from N-acetyl-alpha-D-glucosamine 1-phosphate: step 1/1. The protein operates within bacterial outer membrane biogenesis; LPS lipid A biosynthesis. Catalyzes the last two sequential reactions in the de novo biosynthetic pathway for UDP-N-acetylglucosamine (UDP-GlcNAc). The C-terminal domain catalyzes the transfer of acetyl group from acetyl coenzyme A to glucosamine-1-phosphate (GlcN-1-P) to produce N-acetylglucosamine-1-phosphate (GlcNAc-1-P), which is converted into UDP-GlcNAc by the transfer of uridine 5-monophosphate (from uridine 5-triphosphate), a reaction catalyzed by the N-terminal domain. The sequence is that of Bifunctional protein GlmU from Agrobacterium fabrum (strain C58 / ATCC 33970) (Agrobacterium tumefaciens (strain C58)).